The sequence spans 62 residues: Large ribosomal subunit protein bL28 (62 aa).

The protein belongs to the bacterial ribosomal protein bL28 family.

In Staphylococcus epidermidis (strain ATCC 12228 / FDA PCI 1200), this protein is Large ribosomal subunit protein bL28.